A 356-amino-acid polypeptide reads, in one-letter code: Protein-L-isoaspartate O-methyltransferase domain-containing protein 1 (356 aa).

The N-myristoyl glycine moiety is linked to residue Gly2. Residue Ser64 is part of the active site. AdoMet binding motif regions lie at residues 85-94, 160-164, and 181-191; these read LNLGSGTGYL, YDRIY, and LKVGGILVMPI. Positions 240 to 250 are BC-box; sequence VRNLQDLARIY. The interval 299 to 331 is disordered; sequence PLDSEEDEKMEEDKEEEEKEPGEALKPEEPPQN. The segment covering 301–318 has biased composition (acidic residues); it reads DSEEDEKMEEDKEEEEKE. The segment covering 319–331 has biased composition (basic and acidic residues); that stretch reads PGEALKPEEPPQN. Positions 340–343 are CUL-box; sequence LPLP.

It belongs to the methyltransferase superfamily. L-isoaspartyl/D-aspartyl protein methyltransferase family. Component of the probable ECS(PCMTD1) E3 ubiquitin-protein ligase complex, at least composed of CUL5, ELOB, ELOC, RBX2 and PCMTD1. Interacts (via the BC-box) with ELOB and ELOC; the interaction is direct and stabilizes PCMTD1.

It localises to the cytoplasm. The protein localises to the membrane. Functionally, substrate recognition component of an ECS (Elongin BC-CUL5-SOCS-box protein) E3 ubiquitin ligase complex which mediates the ubiquitination and subsequent proteasomal degradation of target proteins. Specifically binds to the methyltransferase cofactor S-adenosylmethionine (AdoMet) via the N-terminal AdoMet binding motif, but does not display methyltransferase activity. May provide an alternate maintenance pathway for modified proteins by acting as a damage-specific E3 ubiquitin ligase adaptor protein. The chain is Protein-L-isoaspartate O-methyltransferase domain-containing protein 1 (PCMTD1) from Bos taurus (Bovine).